The primary structure comprises 72 residues: NAD(P)H-quinone oxidoreductase subunit O (72 aa).

It belongs to the complex I NdhO subunit family. In terms of assembly, NDH-1 can be composed of about 15 different subunits; different subcomplexes with different compositions have been identified which probably have different functions.

The protein resides in the cellular thylakoid membrane. The enzyme catalyses a plastoquinone + NADH + (n+1) H(+)(in) = a plastoquinol + NAD(+) + n H(+)(out). It catalyses the reaction a plastoquinone + NADPH + (n+1) H(+)(in) = a plastoquinol + NADP(+) + n H(+)(out). In terms of biological role, NDH-1 shuttles electrons from an unknown electron donor, via FMN and iron-sulfur (Fe-S) centers, to quinones in the respiratory and/or the photosynthetic chain. The immediate electron acceptor for the enzyme in this species is believed to be plastoquinone. Couples the redox reaction to proton translocation, and thus conserves the redox energy in a proton gradient. Cyanobacterial NDH-1 also plays a role in inorganic carbon-concentration. The polypeptide is NAD(P)H-quinone oxidoreductase subunit O (Trichodesmium erythraeum (strain IMS101)).